The chain runs to 730 residues: Ribosomal RNA large subunit methyltransferase K/L (730 aa).

One can recognise a THUMP domain in the interval 46–157 (TAYRLCVWSR…RGEAILSLDL (112 aa)). A disordered region spans residues 395–418 (ERREAQPEGTEVRQQAPQASEPAR).

This sequence belongs to the methyltransferase superfamily. RlmKL family.

The protein localises to the cytoplasm. The enzyme catalyses guanosine(2445) in 23S rRNA + S-adenosyl-L-methionine = N(2)-methylguanosine(2445) in 23S rRNA + S-adenosyl-L-homocysteine + H(+). It carries out the reaction guanosine(2069) in 23S rRNA + S-adenosyl-L-methionine = N(2)-methylguanosine(2069) in 23S rRNA + S-adenosyl-L-homocysteine + H(+). Functionally, specifically methylates the guanine in position 2445 (m2G2445) and the guanine in position 2069 (m7G2069) of 23S rRNA. The chain is Ribosomal RNA large subunit methyltransferase K/L from Pseudomonas putida (strain GB-1).